The chain runs to 378 residues: 5-amino-6-(D-ribitylamino)uracil--L-tyrosine 4-hydroxyphenyl transferase (378 aa).

Positions 59–306 (VTYVINRNIN…TAVARIYLGN (248 aa)) constitute a Radical SAM core domain. Positions 73, 77, and 80 each coordinate [4Fe-4S] cluster.

This sequence belongs to the radical SAM superfamily. CofH family. In terms of assembly, consists of two subunits, CofG and CofH. [4Fe-4S] cluster is required as a cofactor.

The catalysed reaction is 5-amino-6-(D-ribitylamino)uracil + L-tyrosine + S-adenosyl-L-methionine = 5-amino-5-(4-hydroxybenzyl)-6-(D-ribitylimino)-5,6-dihydrouracil + 2-iminoacetate + 5'-deoxyadenosine + L-methionine + H(+). It functions in the pathway cofactor biosynthesis; coenzyme F0 biosynthesis. Catalyzes the radical-mediated synthesis of 5-amino-5-(4-hydroxybenzyl)-6-(D-ribitylimino)-5,6-dihydrouracil from 5-amino-6-(D-ribitylamino)uracil and L-tyrosine. The protein is 5-amino-6-(D-ribitylamino)uracil--L-tyrosine 4-hydroxyphenyl transferase of Microcystis aeruginosa (strain NIES-843 / IAM M-2473).